The primary structure comprises 241 residues: Small ribosomal subunit protein uS2 (241 aa).

The protein belongs to the universal ribosomal protein uS2 family.

In Enterobacter sp. (strain 638), this protein is Small ribosomal subunit protein uS2.